The primary structure comprises 460 residues: Chromosomal replication initiator protein DnaA (460 aa).

Residues 1 to 84 (MAVSLWQQCI…RFDIGSRPSA (84 aa)) are domain I, interacts with DnaA modulators. Residues 84–123 (AKKPEPAPVAAVRVPNPQTKASVGTSFNTTEPVVNANHRS) are domain II. The tract at residues 124–340 (NINPTYQFDN…GALNRVIANA (217 aa)) is domain III, AAA+ region. Gly168, Gly170, Lys171, and Thr172 together coordinate ATP. The segment at 341–460 (NFTGRPITID…YANLIRTLSS (120 aa)) is domain IV, binds dsDNA.

The protein belongs to the DnaA family. As to quaternary structure, oligomerizes as a right-handed, spiral filament on DNA at oriC.

The protein localises to the cytoplasm. Its function is as follows. Plays an essential role in the initiation and regulation of chromosomal replication. ATP-DnaA binds to the origin of replication (oriC) to initiate formation of the DNA replication initiation complex once per cell cycle. Binds the DnaA box (a 9 base pair repeat at the origin) and separates the double-stranded (ds)DNA. Forms a right-handed helical filament on oriC DNA; dsDNA binds to the exterior of the filament while single-stranded (ss)DNA is stabiized in the filament's interior. The ATP-DnaA-oriC complex binds and stabilizes one strand of the AT-rich DNA unwinding element (DUE), permitting loading of DNA polymerase. After initiation quickly degrades to an ADP-DnaA complex that is not apt for DNA replication. Binds acidic phospholipids. The polypeptide is Chromosomal replication initiator protein DnaA (Shewanella sp. (strain MR-7)).